The primary structure comprises 1459 residues: PPE family protein PPE34 (1459 aa).

This sequence belongs to the mycobacterial PPE family. Interacts with human TLR2.

The protein resides in the cell membrane. It is found in the secreted. Its subcellular location is the cell wall. The protein localises to the cell surface. Facilitates a shift in the ensuing immunity toward the Th2 phenotype and could aid in immune evasion by mycobacteria. Interacts with human Toll-like receptor 2 (TLR2) and triggers functional maturation of human dendritic cells (DCs), leading to secretion of IL-4, IL-5 and IL-10 from CD4(+) T cells and induction of Th2 immune response. Maturation of DCs involves PI3K, ERK1/2, p38 MAPK and NF-kappa-B signaling pathways. The polypeptide is PPE family protein PPE34 (Mycobacterium tuberculosis (strain ATCC 25618 / H37Rv)).